A 747-amino-acid polypeptide reads, in one-letter code: Rho GTPase-activating protein 24 (747 aa).

2 disordered regions span residues 1–20 (MEERCESTESPQGQGRKNTK) and 327–475 (FPKD…GTHS). The PH domain maps to 17–123 (KNTKCGWLRK…WVKSIRRVIW (107 aa)). The Rho-GAP domain occupies 133–327 (QKLEDTVRYE…VMISKHDRLF (195 aa)). Polar residues-rich tracts occupy residues 334-346 (QSKPQDGPNSNNN) and 355-367 (GQLQNKENNNTKE). A phosphoserine mark is found at Ser368, Ser390, Ser395, Ser397, Ser401, Ser412, Ser414, and Ser436. Residues 368–380 (SPVRRCSWDKPES) are compositionally biased toward basic and acidic residues. Residues 381–404 (PQRSSVDNGSPTALSGSKTNSPRN) show a composition bias toward polar residues. The span at 431–475 (IVTNGSFSSSNAEGVEKPQTTPNGSLQARRTSSLKSSGTKMGTHS) shows a compositional bias: polar residues. The residue at position 451 (Thr451) is a Phosphothreonine. Phosphoserine is present on Ser494. The tract at residues 581-639 (DFYVGNFEDPVLDGPPQDDLSHPGDYENKSDRRSVGGRSSRATSSSDNSETFVGNTSSN) is disordered. A compositionally biased stretch (basic and acidic residues) spans 599–614 (DLSHPGDYENKSDRRS). Positions 616–629 (GGRSSRATSSSDNS) are enriched in low complexity. A compositionally biased stretch (polar residues) spans 630–639 (ETFVGNTSSN). Positions 648–728 (SSLKQEMTKQ…KEMEQFFSTF (81 aa)) form a coiled coil.

In terms of assembly, interacts with FLNA. In terms of processing, phosphorylated by ROCK, leading to activate the RacGAP activity.

The protein localises to the cytoplasm. It localises to the cytoskeleton. The protein resides in the cell junction. Its subcellular location is the adherens junction. It is found in the focal adhesion. The protein localises to the cell projection. Its function is as follows. Rho GTPase-activating protein involved in cell polarity, cell morphology and cytoskeletal organization. Acts as a GTPase activator for the Rac-type GTPase by converting it to an inactive GDP-bound state. Controls actin remodeling by inactivating Rac downstream of Rho leading to suppress leading edge protrusion and promotes cell retraction to achieve cellular polarity. Able to suppress RAC1 and CDC42 activity in vitro. Overexpression induces cell rounding with partial or complete disruption of actin stress fibers and formation of membrane ruffles, lamellipodia, and filopodia. Isoform 2 is a vascular cell-specific GAP involved in modulation of angiogenesis. In Mus musculus (Mouse), this protein is Rho GTPase-activating protein 24 (Arhgap24).